A 470-amino-acid polypeptide reads, in one-letter code: MHTVEDMLVEKNYSKCPLKKRPVNYQFEAPQNHSNTPNEPQDLCVKKMEILEENPSEELINVSDCCEDEGVDVDHTDDEHIEEEDEDVDVDVDSDPNQTQAAALAAAAAVAAAAAASVVVPTPTYPKYPWNNFHMSPYTAEFYRTINQQGHQILPLRGDLIAPSSPSDSLGSLSPPPHHYLHGRASSVSPPMRSEIIHRPIGVRQHRFLPYPQMPGYPSLGGYTHTHHHHAPISPAYSENSYYSMRSMTPESSCSSSLPEDLSLKHKNLNLNLNTSQPGEQAAAKTGDMSPETMPNASAKKDKNQPPRYQCPDCQKSYSTFSGLTKHQQFHCPAAEGNQVKKSFSCKDCDKTYVSLGALKMHIRTHTLPCKCNLCGKAFSRPWLLQGHIRTHTGEKPFSCQHCHRAFADRSNLRAHLQTHSDIKKYSCTSCSKTFSRMSLLTKHSEGGCPGGSAGSSSSSELNYAGYAEP.

Residues 271–309 (LNLNTSQPGEQAAAKTGDMSPETMPNASAKKDKNQPPRY) are disordered. 4 consecutive C2H2-type zinc fingers follow at residues 309–331 (YQCPDCQKSYSTFSGLTKHQQFH), 344–366 (FSCKDCDKTYVSLGALKMHIRTH), 370–392 (CKCNLCGKAFSRPWLLQGHIRTH), and 398–420 (FSCQHCHRAFADRSNLRAHLQTH). Residues 426-449 (YSCTSCSKTFSRMSLLTKHSEGGC) form a C2H2-type 5; atypical zinc finger. The tract at residues 448-470 (GCPGGSAGSSSSSELNYAGYAEP) is disordered.

It belongs to the snail C2H2-type zinc-finger protein family. As to expression, expression is complex and dynamic. In early embryogenesis, expression begins on the dorsal side of the embryo. Expressed in a pattern of longitudinal stripes early in germband elongation. Later in embryogenesis, expression is in cells that correspond to the wing, haltere, leg and genital imaginal disks and the abdominal histoblasts. In the embryonic leg disk, expression is restricted to imaginal cells. Also expressed in the central nervous system (CNS), tracheae and head of stage 14 embryos. CNS and tracheal expression decays during later stages, though head expression persists until late in embryogenesis. In third instar larvae, expression is seen in the brain and in regions of many imaginal tissues including the eye-antennal, wing, leg and haltere disks. Expressed in embryonic, larval and adult male germline stem cells and in the somatic cells of the embryonic gonads.

It localises to the nucleus. In terms of biological role, transcription factor that can both stimulate and repress transcription. Binds to the consensus DNA sequence 5'-A/GCAGGTG-3'. Regulates cell motility and adhesion during tracheal morphogenesis by stimulating transcription of the DE-cadherin gene shg at branch tips, thereby promoting tracheal tube fusion. Maintains diploidy in imaginal cells by inhibiting the transcription of genes required for endoreplication. Required for development of the genital disk and acts as an intrinsic determinant of wing cell fate. The somatic protein is required for maintenance of male germ cells. Acts with other members of the snail protein family to control embryonic central nervous system development. The protein is Protein escargot (esg) of Drosophila melanogaster (Fruit fly).